Consider the following 113-residue polypeptide: U11-theraphotoxin-Hhn1e (113 aa).

The signal sequence occupies residues 1 to 21 (MNTVRVTFLLVFVLAVSLGQA). Residues 22 to 74 (DKDENRMEMLEKTEQGKSYLDFAENLLLQKLEELEARLLEEDSEESRNSRQKR) constitute a propeptide that is removed on maturation. Positions 60 to 69 (LEEDSEESRN) are enriched in basic and acidic residues. The disordered stretch occupies residues 60–87 (LEEDSEESRNSRQKRCIGEGVPRDENDP). 2 cysteine pairs are disulfide-bonded: cysteine 75/cysteine 90 and cysteine 89/cysteine 110.

This sequence belongs to the neurotoxin 14 (magi-1) family. 01 (HNTX-16) subfamily. As to expression, expressed by the venom gland.

The protein localises to the secreted. In terms of biological role, probable ion channel inhibitor. The protein is U11-theraphotoxin-Hhn1e of Cyriopagopus hainanus (Chinese bird spider).